A 315-amino-acid chain; its full sequence is Glycine--tRNA ligase alpha subunit (315 aa).

It belongs to the class-II aminoacyl-tRNA synthetase family. In terms of assembly, tetramer of two alpha and two beta subunits.

It is found in the cytoplasm. It carries out the reaction tRNA(Gly) + glycine + ATP = glycyl-tRNA(Gly) + AMP + diphosphate. In Pseudomonas putida (strain ATCC 47054 / DSM 6125 / CFBP 8728 / NCIMB 11950 / KT2440), this protein is Glycine--tRNA ligase alpha subunit.